A 436-amino-acid polypeptide reads, in one-letter code: Voltage-gated purine nucleotide uniporter SLC17A9 (436 aa).

Transmembrane regions (helical) follow at residues 64–84, 92–112, 118–138, 158–178, 181–201, 239–259, 276–296, 316–336, 369–389, and 402–422; these read IVLSSFFWGYCLTQVVGGHLG, VILLSASAWGSITAVTPLLAH, LAFMTFSRILMGLLQGVYFPA, IVGAGSQFGTLLTGAVGSLLL, YGWQSIFYFSGGLTLLWVWYV, PAVWAAVVSQLSAACSFFILL, WIFNVVPWLVAIPASLFSGFL, GMGLGLSSVFALCLGHTSSFC, GFLFGVANTAGALAGVVGVCL, and CLFNLVAIISNLGLCTFLVFG.

Belongs to the major facilitator superfamily. Sodium/anion cotransporter family. Widely expressed, but more predominantly in adrenal gland, brain and thyroid.

It is found in the cytoplasmic vesicle. Its subcellular location is the secretory vesicle. The protein localises to the chromaffin granule membrane. It localises to the secretory vesicle membrane. The protein resides in the lysosome membrane. It catalyses the reaction ATP(in) = ATP(out). The enzyme catalyses ADP(in) = ADP(out). The catalysed reaction is GTP(in) = GTP(out). Activity is chloride-dependent. Inhibited by AMP-PNP, gammaS-ATP, diadenosine triphosphate, 4,4'- diisothiocyanatostilbene-2,2'-disulfonate (DIDS) and Evans blue. In terms of biological role, voltage-gated ATP nucleotide uniporter that can also transport the purine nucleotides ADP and GTP. Uses the membrane potential as the driving force to control ATP accumulation in lysosomes and secretory vesicles. By controlling ATP storage in lysosomes, regulates ATP-dependent proteins of these organelles. Also indirectly regulates the exocytosis of ATP through its import into lysosomes in astrocytes and secretory vesicles such as adrenal chromaffin granules, mucin granules and synaptic vesicles. This chain is Voltage-gated purine nucleotide uniporter SLC17A9, found in Homo sapiens (Human).